The chain runs to 254 residues: MRALDYRAAIETITSFLSEKLEESGSGGFVIGISGGIDSATAAYLAAKAVGTENVLGLIMPYYENNDVEDAKLVCESLGIDYEVINIKPIVESFVSQLGFQPDKRSLGNIMSRTRMILLYAHANQLNRLVLGTSNRSEFLTGYFTKWGDGASDYAPLINLYKTEVWEIAKLLGVPGRIIQKKPTAGLWEGQTDEDELGISYRLLDEILWRLVDLKMPKEKIVEELGISVEKVEYVEGLVRRSEHKRRLPVGPEF.

An ATP-binding site is contributed by 32–39 (GISGGIDS). Asp-38 is a Mg(2+) binding site. Residue Arg-113 participates in deamido-NAD(+) binding. Thr-133 serves as a coordination point for ATP. Mg(2+) is bound at residue Glu-138. Lys-146 and Asp-153 together coordinate deamido-NAD(+). ATP is bound by residues Lys-162 and Thr-184. A deamido-NAD(+)-binding site is contributed by 244–245 (HK).

Belongs to the NAD synthetase family. As to quaternary structure, homodimer.

The enzyme catalyses deamido-NAD(+) + NH4(+) + ATP = AMP + diphosphate + NAD(+) + H(+). It participates in cofactor biosynthesis; NAD(+) biosynthesis; NAD(+) from deamido-NAD(+) (ammonia route): step 1/1. Its function is as follows. Catalyzes the ATP-dependent amidation of deamido-NAD to form NAD. Uses ammonia as a nitrogen source. The chain is NH(3)-dependent NAD(+) synthetase from Thermococcus kodakarensis (strain ATCC BAA-918 / JCM 12380 / KOD1) (Pyrococcus kodakaraensis (strain KOD1)).